Reading from the N-terminus, the 304-residue chain is 33 kDa chaperonin (304 aa).

2 disulfides stabilise this stretch: cysteine 245-cysteine 247 and cysteine 278-cysteine 281.

This sequence belongs to the HSP33 family. Under oxidizing conditions two disulfide bonds are formed involving the reactive cysteines. Under reducing conditions zinc is bound to the reactive cysteines and the protein is inactive.

It localises to the cytoplasm. Its function is as follows. Redox regulated molecular chaperone. Protects both thermally unfolding and oxidatively damaged proteins from irreversible aggregation. Plays an important role in the bacterial defense system toward oxidative stress. The chain is 33 kDa chaperonin from Microcystis aeruginosa (strain NIES-843 / IAM M-2473).